Here is a 432-residue protein sequence, read N- to C-terminus: Histidine--tRNA ligase (432 aa).

A disordered region spans residues 412–432; that stretch reads TQVPLAAFPPEEGRPTYDDYA. The span at 422-432 shows a compositional bias: basic and acidic residues; it reads EEGRPTYDDYA.

It belongs to the class-II aminoacyl-tRNA synthetase family.

Its subcellular location is the cytoplasm. It catalyses the reaction tRNA(His) + L-histidine + ATP = L-histidyl-tRNA(His) + AMP + diphosphate + H(+). The sequence is that of Histidine--tRNA ligase from Natronomonas pharaonis (strain ATCC 35678 / DSM 2160 / CIP 103997 / JCM 8858 / NBRC 14720 / NCIMB 2260 / Gabara) (Halobacterium pharaonis).